The chain runs to 279 residues: Ribosomal RNA small subunit methyltransferase J (279 aa).

Residues Glu138–Arg139 and Asp194 contribute to the S-adenosyl-L-methionine site.

It belongs to the methyltransferase superfamily. RsmJ family.

Its subcellular location is the cytoplasm. It catalyses the reaction guanosine(1516) in 16S rRNA + S-adenosyl-L-methionine = N(2)-methylguanosine(1516) in 16S rRNA + S-adenosyl-L-homocysteine + H(+). Specifically methylates the guanosine in position 1516 of 16S rRNA. The protein is Ribosomal RNA small subunit methyltransferase J of Acinetobacter baumannii (strain ACICU).